The primary structure comprises 170 residues: Probable chemoreceptor glutamine deamidase CheD (170 aa).

The protein belongs to the CheD family.

The enzyme catalyses L-glutaminyl-[protein] + H2O = L-glutamyl-[protein] + NH4(+). Its function is as follows. Probably deamidates glutamine residues to glutamate on methyl-accepting chemotaxis receptors (MCPs), playing an important role in chemotaxis. The protein is Probable chemoreceptor glutamine deamidase CheD of Maridesulfovibrio salexigens (strain ATCC 14822 / DSM 2638 / NCIMB 8403 / VKM B-1763) (Desulfovibrio salexigens).